The chain runs to 292 residues: Glycine--tRNA ligase alpha subunit (292 aa).

It belongs to the class-II aminoacyl-tRNA synthetase family. In terms of assembly, tetramer of two alpha and two beta subunits.

Its subcellular location is the cytoplasm. It carries out the reaction tRNA(Gly) + glycine + ATP = glycyl-tRNA(Gly) + AMP + diphosphate. This Pelobacter propionicus (strain DSM 2379 / NBRC 103807 / OttBd1) protein is Glycine--tRNA ligase alpha subunit.